The chain runs to 192 residues: Peptidyl-prolyl cis-trans isomerase 1 (192 aa).

Positions 25 to 188 constitute a PPIase cyclophilin-type domain; sequence FFDVSIGEEP…KTVTIADCGE (164 aa).

It belongs to the cyclophilin-type PPIase family.

The enzyme catalyses [protein]-peptidylproline (omega=180) = [protein]-peptidylproline (omega=0). Functionally, PPIases accelerate the folding of proteins. It catalyzes the cis-trans isomerization of proline imidic peptide bonds in oligopeptides. In Caenorhabditis elegans, this protein is Peptidyl-prolyl cis-trans isomerase 1 (cyn-1).